A 149-amino-acid chain; its full sequence is Prefoldin subunit alpha (149 aa).

This sequence belongs to the prefoldin subunit alpha family. As to quaternary structure, heterohexamer of two alpha and four beta subunits.

Its subcellular location is the cytoplasm. Molecular chaperone capable of stabilizing a range of proteins. Seems to fulfill an ATP-independent, HSP70-like function in archaeal de novo protein folding. In Methanospirillum hungatei JF-1 (strain ATCC 27890 / DSM 864 / NBRC 100397 / JF-1), this protein is Prefoldin subunit alpha.